Reading from the N-terminus, the 235-residue chain is 7-cyano-7-deazaguanine synthase (235 aa).

Phenylalanine 13–leucine 23 is a binding site for ATP. The Zn(2+) site is built by cysteine 197, cysteine 207, cysteine 210, and cysteine 213.

This sequence belongs to the QueC family. The cofactor is Zn(2+).

It catalyses the reaction 7-carboxy-7-deazaguanine + NH4(+) + ATP = 7-cyano-7-deazaguanine + ADP + phosphate + H2O + H(+). It functions in the pathway purine metabolism; 7-cyano-7-deazaguanine biosynthesis. In terms of biological role, catalyzes the ATP-dependent conversion of 7-carboxy-7-deazaguanine (CDG) to 7-cyano-7-deazaguanine (preQ(0)). This chain is 7-cyano-7-deazaguanine synthase, found in Solidesulfovibrio magneticus (strain ATCC 700980 / DSM 13731 / RS-1) (Desulfovibrio magneticus).